Reading from the N-terminus, the 288-residue chain is Glucose-1-phosphate thymidylyltransferase (288 aa).

The Mg(2+) site is built by Asp-108 and Asp-223.

The protein belongs to the glucose-1-phosphate thymidylyltransferase family. As to quaternary structure, homotetramer. Mg(2+) serves as cofactor.

It carries out the reaction dTTP + alpha-D-glucose 1-phosphate + H(+) = dTDP-alpha-D-glucose + diphosphate. In terms of biological role, catalyzes the formation of dTDP-glucose, from dTTP and glucose 1-phosphate, as well as its pyrophosphorolysis. This is Glucose-1-phosphate thymidylyltransferase (rmlA1) from Neisseria meningitidis serogroup A / serotype 4A (strain DSM 15465 / Z2491).